The primary structure comprises 585 residues: Glutamate decarboxylase 2 (585 aa).

The span at 1–14 (MASPGSGFWSFGSE) shows a compositional bias: low complexity. A disordered region spans residues 1–24 (MASPGSGFWSFGSEDGSGDSENPG). Ser3, Ser6, Ser10, and Ser13 each carry phosphoserine. Residues Cys30 and Cys45 are each lipidated (S-palmitoyl cysteine). Residue 181–183 (QLS) participates in substrate binding. Lys396 is subject to N6-(pyridoxal phosphate)lysine. Residue Arg558 coordinates substrate.

The protein belongs to the group II decarboxylase family. In terms of assembly, homodimer. The cofactor is pyridoxal 5'-phosphate. Phosphorylated; which does not affect kinetic parameters or subcellular location. In terms of processing, palmitoylated; which is required for presynaptic clustering.

It is found in the cytoplasm. Its subcellular location is the cytosol. The protein localises to the cytoplasmic vesicle. The protein resides in the presynaptic cell membrane. It localises to the golgi apparatus membrane. It catalyses the reaction L-glutamate + H(+) = 4-aminobutanoate + CO2. Functionally, catalyzes the production of GABA. This is Glutamate decarboxylase 2 from Homo sapiens (Human).